The sequence spans 240 residues: uncharacterized protein (240 aa).

D66 functions as the Proton acceptor in the catalytic mechanism. Residue D129 is part of the active site. The active-site Proton acceptor is H131.

This sequence belongs to the glucosamine/galactosamine-6-phosphate isomerase family.

This is an uncharacterized protein from Escherichia coli (strain K12).